The primary structure comprises 114 residues: Nucleoid-associated protein THEYE_A1069 (114 aa).

It belongs to the YbaB/EbfC family. In terms of assembly, homodimer.

It is found in the cytoplasm. Its subcellular location is the nucleoid. Its function is as follows. Binds to DNA and alters its conformation. May be involved in regulation of gene expression, nucleoid organization and DNA protection. The chain is Nucleoid-associated protein THEYE_A1069 from Thermodesulfovibrio yellowstonii (strain ATCC 51303 / DSM 11347 / YP87).